Reading from the N-terminus, the 275-residue chain is NH(3)-dependent NAD(+) synthetase (275 aa).

Residue 50–57 (GISGGVDS) coordinates ATP. Asp56 is a Mg(2+) binding site. Arg147 lines the deamido-NAD(+) pocket. Residue Thr167 coordinates ATP. Position 172 (Glu172) interacts with Mg(2+). Residues Lys180 and Asp187 each coordinate deamido-NAD(+). 2 residues coordinate ATP: Lys196 and Thr218. 267–268 (HK) is a binding site for deamido-NAD(+).

Belongs to the NAD synthetase family. Homodimer.

The catalysed reaction is deamido-NAD(+) + NH4(+) + ATP = AMP + diphosphate + NAD(+) + H(+). Its pathway is cofactor biosynthesis; NAD(+) biosynthesis; NAD(+) from deamido-NAD(+) (ammonia route): step 1/1. Its function is as follows. Catalyzes the ATP-dependent amidation of deamido-NAD to form NAD. Uses ammonia as a nitrogen source. The chain is NH(3)-dependent NAD(+) synthetase from Pseudomonas fluorescens (strain Pf0-1).